The sequence spans 582 residues: 2-succinyl-5-enolpyruvyl-6-hydroxy-3-cyclohexene-1-carboxylate synthase (582 aa).

Belongs to the TPP enzyme family. MenD subfamily. In terms of assembly, homodimer. It depends on Mg(2+) as a cofactor. The cofactor is Mn(2+). Requires thiamine diphosphate as cofactor.

It carries out the reaction isochorismate + 2-oxoglutarate + H(+) = 5-enolpyruvoyl-6-hydroxy-2-succinyl-cyclohex-3-ene-1-carboxylate + CO2. It participates in quinol/quinone metabolism; 1,4-dihydroxy-2-naphthoate biosynthesis; 1,4-dihydroxy-2-naphthoate from chorismate: step 2/7. The protein operates within quinol/quinone metabolism; menaquinone biosynthesis. In terms of biological role, catalyzes the thiamine diphosphate-dependent decarboxylation of 2-oxoglutarate and the subsequent addition of the resulting succinic semialdehyde-thiamine pyrophosphate anion to isochorismate to yield 2-succinyl-5-enolpyruvyl-6-hydroxy-3-cyclohexene-1-carboxylate (SEPHCHC). The protein is 2-succinyl-5-enolpyruvyl-6-hydroxy-3-cyclohexene-1-carboxylate synthase of Chlorobaculum tepidum (strain ATCC 49652 / DSM 12025 / NBRC 103806 / TLS) (Chlorobium tepidum).